Consider the following 3598-residue polypeptide: Dystrophin, isoforms A/C/F/G/H (3598 aa).

The interval M1–E230 is actin-binding. Calponin-homology (CH) domains lie at H12–N116 and N127–E230. Residues R233–R297 form a disordered region. Positions N267–R286 are enriched in polar residues. 6 Spectrin repeats span residues V307–M420, A423–Q525, Q851–N963, S1056–H1170, T1173–Q1275, and S1381–R1483. Disordered regions lie at residues A1633–D1696, S1716–A1742, E1799–S1854, R1878–V1941, and G2204–S2233. Positions S1663–T1679 are enriched in low complexity. Residues S1803–R1816 are compositionally biased toward basic and acidic residues. S1832 and S1838 each carry phosphoserine. Acidic residues predominate over residues N1834–E1843. Residues R1878–D1893 show a composition bias toward basic and acidic residues. Polar residues predominate over residues S2218–S2233. 5 Spectrin repeats span residues A2237–N2363, S2366–A2472, H2475–S2576, E2579–E2712, and T2715–Q2819. The interval V2655–R2679 is disordered. Positions A2822–K2852 are disordered. Residues Q2849–M2882 form the WW domain. The ZZ-type zinc-finger motif lies at K3107–T3163. Zn(2+) contacts are provided by C3112, C3115, C3127, C3130, C3136, C3139, H3149, and H3153. S3207 carries the post-translational modification Phosphoserine. Disordered stretches follow at residues E3316–G3344, D3387–M3449, L3483–L3545, and E3560–K3598. Composition is skewed to polar residues over residues N3325–L3337 and A3408–G3439. Residues Q3485 to Q3499 show a composition bias toward low complexity. Residues G3505–G3523 show a composition bias toward gly residues. The span at S3534 to L3545 shows a compositional bias: low complexity. Positions E3560–D3570 are enriched in acidic residues. Residues S3571–T3589 show a composition bias toward low complexity.

Component of the dystrophin associated protein complex (DAPC). Interacts with Dg, via the Dg WW domain binding sites. Isoform A, isoform F and isoform G are expressed in the midgut endoderm of stage 12 embryos. In stage 16 embryos, expression is also seen in the pericardial cells, cells at the ectoderm segmental border and cells along the midline of the CNS. During embryogenesis, isoform A is also expressed in the visceral mesoderm, muscle attachment sites, mesectodermal cells at the midline, the gut, and throughout muscle fibers. In larvae, isoform A is found in all muscle fibers, but not detectable in the brain or neuropil.

The protein resides in the cell membrane. The protein localises to the sarcolemma. Its subcellular location is the cytoplasm. It is found in the cytoskeleton. In terms of biological role, required for the maintenance of appropriate synaptic retrograde communication and the stabilization of muscle cell architecture or physiology. Both det and Dg are required for maintenance of early dpp signaling in the presumptive crossvein. Isoform A is not required to maintain muscle integrity, but plays a role in neuromuscular homeostasis by regulating neurotransmitter release. May play a role in anchoring the cytoskeleton to the plasma membrane. The polypeptide is Dystrophin, isoforms A/C/F/G/H (Dys) (Drosophila melanogaster (Fruit fly)).